The primary structure comprises 808 residues: Type VI secretion system spike protein VgrG4b (808 aa).

This sequence belongs to the VgrG protein family.

The protein resides in the secreted. In terms of biological role, part of the H2 type VI secretion system (H2-T6SS) specialized secretion system, which delivers several virulence factors in both prokaryotic and eukaryotic cells during infection. Allows the delivery of the phospholipase effector PldA to target cells where it exerts its toxicity. This Pseudomonas aeruginosa (strain ATCC 15692 / DSM 22644 / CIP 104116 / JCM 14847 / LMG 12228 / 1C / PRS 101 / PAO1) protein is Type VI secretion system spike protein VgrG4b.